The primary structure comprises 512 residues: Cytochrome P450 1A1 (512 aa).

Positions 29 to 40 are mitochondrial targeting signal; it reads SRPQVPKGLKNP. An O-linked (GlcNAc) serine glycan is attached at serine 67. Phenylalanine 224 contacts substrate. Cysteine 457 is a binding site for heme.

The protein belongs to the cytochrome P450 family. In terms of assembly, interacts with cytosolic chaperones HSP70 and HSP90; this interaction is required for initial targeting to mitochondria. Interacts (via mitochondrial targeting signal) with TOMM40 (via N-terminus); this interaction is required for translocation across the mitochondrial outer membrane. Heme is required as a cofactor. Lung, lymphocytes and placenta.

Its subcellular location is the endoplasmic reticulum membrane. It localises to the mitochondrion inner membrane. The protein localises to the microsome membrane. It is found in the cytoplasm. It catalyses the reaction an organic molecule + reduced [NADPH--hemoprotein reductase] + O2 = an alcohol + oxidized [NADPH--hemoprotein reductase] + H2O + H(+). The enzyme catalyses estrone + reduced [NADPH--hemoprotein reductase] + O2 = 2-hydroxyestrone + oxidized [NADPH--hemoprotein reductase] + H2O + H(+). The catalysed reaction is estrone + reduced [NADPH--hemoprotein reductase] + O2 = 4-hydroxyestrone + oxidized [NADPH--hemoprotein reductase] + H2O + H(+). It carries out the reaction estrone + reduced [NADPH--hemoprotein reductase] + O2 = 6alpha-hydroxyestrone + oxidized [NADPH--hemoprotein reductase] + H2O + H(+). It catalyses the reaction estrone + reduced [NADPH--hemoprotein reductase] + O2 = 15alpha-hydroxyestrone + oxidized [NADPH--hemoprotein reductase] + H2O + H(+). The enzyme catalyses estrone + reduced [NADPH--hemoprotein reductase] + O2 = 16alpha-hydroxyestrone + oxidized [NADPH--hemoprotein reductase] + H2O + H(+). The catalysed reaction is 17beta-estradiol + reduced [NADPH--hemoprotein reductase] + O2 = 2-hydroxy-17beta-estradiol + oxidized [NADPH--hemoprotein reductase] + H2O + H(+). It carries out the reaction 17beta-estradiol + reduced [NADPH--hemoprotein reductase] + O2 = 4-hydroxy-17beta-estradiol + oxidized [NADPH--hemoprotein reductase] + H2O + H(+). It catalyses the reaction 17beta-estradiol + reduced [NADPH--hemoprotein reductase] + O2 = 6alpha-hydroxy-17beta-estradiol + oxidized [NADPH--hemoprotein reductase] + H2O + H(+). The enzyme catalyses 17beta-estradiol + reduced [NADPH--hemoprotein reductase] + O2 = 7alpha-hydroxy-17beta-estradiol + oxidized [NADPH--hemoprotein reductase] + H2O + H(+). The catalysed reaction is 17beta-estradiol + reduced [NADPH--hemoprotein reductase] + O2 = 15alpha-hydroxy-17beta-estradiol + oxidized [NADPH--hemoprotein reductase] + H2O + H(+). It carries out the reaction (5Z,8Z,11Z)-eicosatrienoate + reduced [NADPH--hemoprotein reductase] + O2 = 19-hydroxy-(5Z,8Z,11Z)-eicosatrienoate + oxidized [NADPH--hemoprotein reductase] + H2O + H(+). It catalyses the reaction (5Z,8Z,11Z,14Z)-eicosatetraenoate + reduced [NADPH--hemoprotein reductase] + O2 = 16-hydroxy-(5Z,8Z,11Z,14Z)-eicosatetraenoate + oxidized [NADPH--hemoprotein reductase] + H2O + H(+). The enzyme catalyses (5Z,8Z,11Z,14Z)-eicosatetraenoate + reduced [NADPH--hemoprotein reductase] + O2 = 17-hydroxy-(5Z,8Z,11Z,14Z)-eicosatetraenoate + oxidized [NADPH--hemoprotein reductase] + H2O + H(+). The catalysed reaction is (5Z,8Z,11Z,14Z)-eicosatetraenoate + reduced [NADPH--hemoprotein reductase] + O2 = 18-hydroxy-(5Z,8Z,11Z,14Z)-eicosatetraenoate + oxidized [NADPH--hemoprotein reductase] + H2O + H(+). It carries out the reaction (5Z,8Z,11Z,14Z)-eicosatetraenoate + reduced [NADPH--hemoprotein reductase] + O2 = 19-hydroxy-(5Z,8Z,11Z,14Z)-eicosatetraenoate + oxidized [NADPH--hemoprotein reductase] + H2O + H(+). It catalyses the reaction (5Z,8Z,11Z,14Z,17Z)-eicosapentaenoate + reduced [NADPH--hemoprotein reductase] + O2 = 19-hydroxy-(5Z,8Z,11Z,14Z,17Z)-eicosapentaenoate + oxidized [NADPH--hemoprotein reductase] + H2O + H(+). The enzyme catalyses (5Z,8Z,11Z,14Z)-eicosatetraenoate + reduced [NADPH--hemoprotein reductase] + O2 = (8R,9S)-epoxy-(5Z,11Z,14Z)-eicosatrienoate + oxidized [NADPH--hemoprotein reductase] + H2O + H(+). The catalysed reaction is (5Z,8Z,11Z,14Z)-eicosatetraenoate + reduced [NADPH--hemoprotein reductase] + O2 = (11R,12S)-epoxy-(5Z,8Z,14Z)-eicosatrienoate + oxidized [NADPH--hemoprotein reductase] + H2O + H(+). It carries out the reaction (5Z,8Z,11Z,14Z)-eicosatetraenoate + reduced [NADPH--hemoprotein reductase] + O2 = (14S,15R)-epoxy-(5Z,8Z,11Z)-eicosatrienoate + oxidized [NADPH--hemoprotein reductase] + H2O + H(+). It catalyses the reaction (5Z,8Z,11Z,14Z)-eicosatetraenoate + reduced [NADPH--hemoprotein reductase] + O2 = (14R,15S)-epoxy-(5Z,8Z,11Z)-eicosatrienoate + oxidized [NADPH--hemoprotein reductase] + H2O + H(+). The enzyme catalyses (5Z,8Z,11Z,14Z,17Z)-eicosapentaenoate + reduced [NADPH--hemoprotein reductase] + O2 = (17R,18S)-epoxy-(5Z,8Z,11Z,14Z)-eicosatetraenoate + oxidized [NADPH--hemoprotein reductase] + H2O + H(+). The catalysed reaction is (4Z,7Z,10Z,13Z,16Z,19Z)-docosahexaenoate + reduced [NADPH--hemoprotein reductase] + O2 = (19S,20R)-epoxy-(4Z,7Z,10Z,13Z,16Z)-docosapentaenoate + oxidized [NADPH--hemoprotein reductase] + H2O + H(+). It carries out the reaction (4Z,7Z,10Z,13Z,16Z,19Z)-docosahexaenoate + reduced [NADPH--hemoprotein reductase] + O2 = (19R,20S)-epoxy-(4Z,7Z,10Z,13Z,16Z)-docosapentaenoate + oxidized [NADPH--hemoprotein reductase] + H2O + H(+). It catalyses the reaction all-trans-retinol + reduced [NADPH--hemoprotein reductase] + O2 = all-trans-retinal + oxidized [NADPH--hemoprotein reductase] + 2 H2O + H(+). The enzyme catalyses all-trans-retinal + reduced [NADPH--hemoprotein reductase] + O2 = all-trans-retinoate + oxidized [NADPH--hemoprotein reductase] + H2O + 2 H(+). The catalysed reaction is (13S)-hydroperoxy-(9Z,11E)-octadecadienoate = 13-oxo-(9Z,11E)-octadecadienoate + H2O. It carries out the reaction (12S)-hydroperoxy-(5Z,8Z,10E,14Z)-eicosatetraenoate = 12-oxo-(5Z,8Z,10E,14Z)-eicosatetraenoate + H2O. It catalyses the reaction (15S)-hydroperoxy-(5Z,8Z,11Z,13E)-eicosatetraenoate = 15-oxo-(5Z,8Z,11Z,13E)-eicosatetraenoate + H2O. The enzyme catalyses (5S)-hydroperoxy-(6E,8Z,11Z,14Z)-eicosatetraenoate = 5-oxo-(6E,8Z,11Z,14Z)-eicosatetraenoate + H2O. Its pathway is steroid hormone biosynthesis. It functions in the pathway lipid metabolism; fatty acid metabolism. It participates in cofactor metabolism; retinol metabolism. A cytochrome P450 monooxygenase involved in the metabolism of various endogenous substrates, including fatty acids, steroid hormones and vitamins. Mechanistically, uses molecular oxygen inserting one oxygen atom into a substrate, and reducing the second into a water molecule, with two electrons provided by NADPH via cytochrome P450 reductase (NADPH--hemoprotein reductase). Catalyzes the hydroxylation of carbon-hydrogen bonds. Exhibits high catalytic activity for the formation of hydroxyestrogens from estrone (E1) and 17beta-estradiol (E2), namely 2-hydroxy E1 and E2, as well as D-ring hydroxylated E1 and E2 at the C15-alpha and C16-alpha positions. Displays different regioselectivities for polyunsaturated fatty acids (PUFA) hydroxylation. Catalyzes the epoxidation of double bonds of certain PUFA. Converts arachidonic acid toward epoxyeicosatrienoic acid (EET) regioisomers, 8,9-, 11,12-, and 14,15-EET, that function as lipid mediators in the vascular system. Displays an absolute stereoselectivity in the epoxidation of eicosapentaenoic acid (EPA) producing the 17(R),18(S) enantiomer. May play an important role in all-trans retinoic acid biosynthesis in extrahepatic tissues. Catalyzes two successive oxidative transformation of all-trans retinol to all-trans retinal and then to the active form all-trans retinoic acid. May also participate in eicosanoids metabolism by converting hydroperoxide species into oxo metabolites (lipoxygenase-like reaction, NADPH-independent). The polypeptide is Cytochrome P450 1A1 (Homo sapiens (Human)).